The following is a 426-amino-acid chain: Histidine--tRNA ligase (426 aa).

The protein belongs to the class-II aminoacyl-tRNA synthetase family. As to quaternary structure, homodimer.

The protein localises to the cytoplasm. The catalysed reaction is tRNA(His) + L-histidine + ATP = L-histidyl-tRNA(His) + AMP + diphosphate + H(+). The chain is Histidine--tRNA ligase from Legionella pneumophila (strain Paris).